A 1013-amino-acid chain; its full sequence is Dichlorochromopyrrolate synthase (1013 aa).

It belongs to the RebD family. In terms of assembly, homodimer. It depends on heme as a cofactor.

It catalyses the reaction 2 3-(7-chloroindol-3-yl)-2-iminopropanoate + H2O2 = dichlorochromopyrrolate + NH4(+) + 2 H2O + H(+). The enzyme catalyses 2 2-iminio-3-(indol-3-yl)propanoate + H2O2 = chromopyrrolate + NH4(+) + 2 H2O + H(+). It carries out the reaction 2 H2O2 = O2 + 2 H2O. Involved in the biosynthesis of the indolocarbazole antitumor agent rebeccamycin. Catalyzes the hydrogen peroxide-dependent dimerization of two L-tryptophan-derived molecules (imine form of indole 3-pyruvate (IPA)), to form dichlorochromopyrrolic acid (CPA), the precursor for the six-ring bisindolopyrrolocarbazole scaffold of the rebeccamycin. The hydrogen peroxide is provided together with iminoindolpropanoate by RebO. Due to the instability of indole 3-pyruvate (IPA), which is hydrolyzed in solution and exits in equilibrium with the predominant ketone form of IPA, the concerted functioning of the RebO/RebD system appears to prevent the buildup of significant amounts of IPA and its imine in solution, effectively shepherding the imine further down the biosynthetic chain. The protein is Dichlorochromopyrrolate synthase (rebD) of Lentzea aerocolonigenes (Lechevalieria aerocolonigenes).